Reading from the N-terminus, the 489-residue chain is Potassium voltage-gated channel subfamily A member 7 (489 aa).

A helical transmembrane segment spans residues 176-196 (VLAVVSVLVILVSIVVFCLET). A glycan (N-linked (GlcNAc...) asparagine) is linked at asparagine 224. A helical membrane pass occupies residues 242–262 (FFVVETLCICWFSFELLVRLV). Cysteine 264 carries the S-palmitoyl cysteine lipid modification. A helical membrane pass occupies residues 274–294 (VMNLIDFVAILPYFVALGTEL). A helical; Voltage-sensor transmembrane segment spans residues 309 to 328 (ILRVIRLVRVFRIFKLSRHS). Residues 345-365 (LGLLIFFLFIGVVLFSSAVYF) form a helical membrane-spanning segment. The Selectivity filter motif lies at 391-396 (TVGYGD). A helical transmembrane segment spans residues 406–426 (IVGSLCAIAGVLTISLPVPVI).

It belongs to the potassium channel family. A (Shaker) (TC 1.A.1.2) subfamily. Kv1.7/KCNA7 sub-subfamily. In terms of assembly, heterotetramer of potassium channel proteins. As to expression, detected in heart, skeletal muscle, brain, and pancreatic islet cells.

It localises to the membrane. The enzyme catalyses K(+)(in) = K(+)(out). In terms of biological role, mediates the voltage-dependent potassium ion permeability of excitable membranes. Assuming opened or closed conformations in response to the voltage difference across the membrane, the protein forms a potassium-selective channel through which potassium ions may pass in accordance with their electrochemical gradient. Channels formed by isoform 1 inactivate faster than channels formed by isoform 2. This Mus musculus (Mouse) protein is Potassium voltage-gated channel subfamily A member 7 (Kcna7).